Consider the following 158-residue polypeptide: Cyclic pyranopterin monophosphate synthase (158 aa).

Residues 75-77 and 113-114 each bind substrate; these read LCH and ME. The active site involves Asp-128.

The protein belongs to the MoaC family. As to quaternary structure, homohexamer; trimer of dimers.

The enzyme catalyses (8S)-3',8-cyclo-7,8-dihydroguanosine 5'-triphosphate = cyclic pyranopterin phosphate + diphosphate. The protein operates within cofactor biosynthesis; molybdopterin biosynthesis. Catalyzes the conversion of (8S)-3',8-cyclo-7,8-dihydroguanosine 5'-triphosphate to cyclic pyranopterin monophosphate (cPMP). The sequence is that of Cyclic pyranopterin monophosphate synthase from Paraburkholderia phytofirmans (strain DSM 17436 / LMG 22146 / PsJN) (Burkholderia phytofirmans).